A 525-amino-acid polypeptide reads, in one-letter code: GMP synthase [glutamine-hydrolyzing] (525 aa).

Residues 9–207 (RILILDFGSQ…VHEICGCPAD (199 aa)) form the Glutamine amidotransferase type-1 domain. The Nucleophile role is filled by C86. Active-site residues include H181 and E183. One can recognise a GMPS ATP-PPase domain in the interval 208 to 400 (WTPGNIVDDL…LGLPADMVYR (193 aa)). Position 235–241 (235–241 (SGGVDSS)) interacts with ATP.

As to quaternary structure, homodimer.

The enzyme catalyses XMP + L-glutamine + ATP + H2O = GMP + L-glutamate + AMP + diphosphate + 2 H(+). Its pathway is purine metabolism; GMP biosynthesis; GMP from XMP (L-Gln route): step 1/1. Catalyzes the synthesis of GMP from XMP. The polypeptide is GMP synthase [glutamine-hydrolyzing] (Alkalilimnicola ehrlichii (strain ATCC BAA-1101 / DSM 17681 / MLHE-1)).